Here is an 82-residue protein sequence, read N- to C-terminus: Small ribosomal subunit protein bS16 (82 aa).

Belongs to the bacterial ribosomal protein bS16 family.

This chain is Small ribosomal subunit protein bS16, found in Mannheimia succiniciproducens (strain KCTC 0769BP / MBEL55E).